A 516-amino-acid chain; its full sequence is Chromosomal replication initiator protein DnaA (516 aa).

The interval 1-72 (MSLEHWNLCL…LLSEFAGDDL (72 aa)) is domain I, interacts with DnaA modulators. The domain II stretch occupies residues 72 to 179 (LAPALKLAVK…QVEGGINHGA (108 aa)). The interval 180–396 (NLNNSFTFDN…GALKRVIANS (217 aa)) is domain III, AAA+ region. Gly-224, Gly-226, Lys-227, and Thr-228 together coordinate ATP. A domain IV, binds dsDNA region spans residues 397–516 (HFTGRAITPD…YKQLMRILTT (120 aa)).

This sequence belongs to the DnaA family. Oligomerizes as a right-handed, spiral filament on DNA at oriC.

Its subcellular location is the cytoplasm. Functionally, plays an essential role in the initiation and regulation of chromosomal replication. ATP-DnaA binds to the origin of replication (oriC) to initiate formation of the DNA replication initiation complex once per cell cycle. Binds the DnaA box (a 9 base pair repeat at the origin) and separates the double-stranded (ds)DNA. Forms a right-handed helical filament on oriC DNA; dsDNA binds to the exterior of the filament while single-stranded (ss)DNA is stabiized in the filament's interior. The ATP-DnaA-oriC complex binds and stabilizes one strand of the AT-rich DNA unwinding element (DUE), permitting loading of DNA polymerase. After initiation quickly degrades to an ADP-DnaA complex that is not apt for DNA replication. Binds acidic phospholipids. In Marinomonas sp. (strain MWYL1), this protein is Chromosomal replication initiator protein DnaA.